The primary structure comprises 722 residues: Zinc finger protein 219 (722 aa).

A disordered region spans residues 1 to 21 (MEGSRPRAPSGHLAPSPPAFD). Ser16 carries the post-translational modification Phosphoserine. 2 C2H2-type zinc fingers span residues 57–79 (FPCP…LRAH) and 85–107 (FQCP…LRTH). The segment at 137-160 (ARSSGGMQATPATEGLARPQAPSS) is disordered. 2 C2H2-type zinc fingers span residues 163–186 (FRCP…HILH) and 189–212 (WKCG…LTAH). The tract at residues 215–275 (PERPLAATSA…EEPPAPPEFR (61 aa)) is disordered. Composition is skewed to pro residues over residues 225–247 (APPP…PQPE) and 259–272 (TPAP…PAPP). 2 consecutive C2H2-type zinc fingers follow at residues 274–296 (FRCQ…MRKH) and 302–324 (HACP…MKVH). Residues 384 to 495 (LRAGEGRPNG…GTRPEGGRGA (112 aa)) form a disordered region. A compositionally biased stretch (gly residues) spans 390–404 (RPNGEGAEPGPGRSF). The segment covering 425–438 (EPEEEEEVVEAEEE) has biased composition (acidic residues). Low complexity predominate over residues 463–477 (SASAAGAQARSTATQ). 2 consecutive C2H2-type zinc fingers follow at residues 498 to 520 (KDCP…LRVH) and 526 to 548 (YKCP…LQRH). 2 disordered regions span residues 542–648 (KYHL…LHRC) and 668–722 (HHSR…GQER). The span at 558–568 (PGPPPEPPPPS) shows a compositional bias: pro residues. Residues 634 to 643 (GPGGEAGPGG) are compositionally biased toward gly residues. The C2H2-type 9 zinc-finger motif lies at 646-668 (HRCLFCPFATGAPELMALHLQVH). Basic residues predominate over residues 668-677 (HHSRRARGRR). Ser692 carries the phosphoserine modification. Thr695 is subject to Phosphothreonine. Ser698 is modified (phosphoserine).

Belongs to the krueppel C2H2-type zinc-finger protein family. In terms of assembly, interacts with SOX9 (via C-terminus). In terms of tissue distribution, ubiquitous.

Its subcellular location is the nucleus. Transcriptional regulator. Recognizes and binds 2 copies of the core DNA sequence motif 5'-GGGGG-3'. Binds to the HMGN1 promoter and may repress HMGN1 expression. Regulates SNCA expression in primary cortical neurons. Binds to the COL2A1 promoter and activates COL2A1 expression, as part of a complex with SOX9. Plays a role in chondrocyte differentiation. The sequence is that of Zinc finger protein 219 (ZNF219) from Homo sapiens (Human).